Consider the following 310-residue polypeptide: 4-hydroxyproline 2-epimerase (310 aa).

C88 serves as the catalytic Proton acceptor. Residues 89 to 90, H208, and D232 each bind substrate; that span reads GH. The Proton donor role is filled by C236. Residue 237–238 participates in substrate binding; that stretch reads GT.

It belongs to the proline racemase family.

The catalysed reaction is trans-4-hydroxy-L-proline = cis-4-hydroxy-D-proline. Functionally, catalyzes the epimerization of trans-4-hydroxy-L-proline (t4LHyp) to cis-4-hydroxy-D-proline (c4DHyp). Is likely involved in a degradation pathway that converts t4LHyp to alpha-ketoglutarate. Can also catalyze the dehydration of trans-3-hydroxy-L-proline (t3LHyp) to Delta(1)-pyrroline-2-carboxylate (Pyr2C), albeit with 42-fold lower efficiency. Displays no proline racemase activity. The sequence is that of 4-hydroxyproline 2-epimerase from Burkholderia thailandensis (strain ATCC 700388 / DSM 13276 / CCUG 48851 / CIP 106301 / E264).